A 260-amino-acid chain; its full sequence is Thrombin-like enzyme flavoxobin (260 aa).

The signal sequence occupies residues 1–18; sequence MVLIRVLANLLILQLSYA. A propeptide spanning residues 19–24 is cleaved from the precursor; it reads QKSSEL. In terms of domain architecture, Peptidase S1 spans 25-251; sequence VIGGDECNIN…YNAWIQSIIA (227 aa). Cystine bridges form between cysteine 31–cysteine 165, cysteine 52–cysteine 68, cysteine 100–cysteine 258, cysteine 144–cysteine 212, cysteine 176–cysteine 191, and cysteine 202–cysteine 227. Residues histidine 67 and aspartate 112 each act as charge relay system in the active site. Residue serine 206 is the Charge relay system of the active site.

Belongs to the peptidase S1 family. Snake venom subfamily. Monomer. As to expression, expressed by the venom gland.

The protein resides in the secreted. It catalyses the reaction Selective cleavage of Arg-|-Xaa bond in fibrinogen, to form fibrin, and release fibrinopeptide A. The specificity of further degradation of fibrinogen varies with species origin of the enzyme.. With respect to regulation, inhibited by alpha(2)-macroglobulin, diisopropylfluorophosphate (DFP) and PMSF. Low inhibition by tosyl-L-lysine chloromethyl ketone. Its function is as follows. Thrombin-like snake venom serine protease that clots fibrinogen (FGA) by releasing fibrinopeptide A. According to PubMed:8585090, only cleaves rabbit fibrinogen, whereas no specificity is described in PubMed:3910643 (tests done on bovine fibrinogen). Also acts as a C3 convertase that independently cleaves human C3 and kick-starts the complement cascade. Also increases urokinase-type plasminogen activator (PLAU) and plasminogen activator inhibitor (SERPINE1) in cultured bovine pulmonary artery endothelial cells. Dose-dependently inhibits collagen-induced platelet aggregation. This Protobothrops flavoviridis (Habu) protein is Thrombin-like enzyme flavoxobin (TLF1).